The sequence spans 492 residues: Trichothecene C-15 hydroxylase (492 aa).

The helical transmembrane segment at 6–26 threads the bilayer; the sequence is LWPLLALSGGTGLAYLVVVVV. Residues 88 to 106 show a composition bias toward basic and acidic residues; sequence AMKDVRGHRKSGEPEHGKD. The tract at residues 88–116 is disordered; that stretch reads AMKDVRGHRKSGEPEHGKDPISVQSNGDN. Residues asparagine 124, asparagine 198, and asparagine 290 are each glycosylated (N-linked (GlcNAc...) asparagine). Cysteine 438 provides a ligand contact to heme.

This sequence belongs to the cytochrome P450 family. Requires heme as cofactor.

The protein resides in the membrane. It functions in the pathway sesquiterpene biosynthesis; trichothecene biosynthesis. In terms of biological role, trichothecene C-15 hydroxylase; part of the core gene cluster that mediates the biosynthesis of trichothecenes, a very large family of chemically related bicyclic sesquiterpene compounds acting as mycotoxins, including T2-toxin. The biosynthesis of trichothecenes begins with the cyclization of farnesyl diphosphate to trichodiene and is catalyzed by the trichodiene synthase TRI5. Trichodiene undergoes a series of oxygenations catalyzed by the cytochrome P450 monooxygenase TRI4. TRI4 controls the addition of four oxygens at C-2, C-3, C-11, and the C-12, C-13-epoxide to form the intermediate isotrichotriol. Isotrichotriol then undergoes a non-enzymatic isomerization and cyclization to form isotrichodermol. During this process, the oxygen at the C-2 position becomes the pyran ring oxygen and the hydroxyl group at C-11 is lost. More complex type A trichothecenes are built by modifying isotrichodermol through a series of paired hydroxylation and acetylation or acylation steps. Isotrichodermol is converted to isotrichodermin by the acetyltransferase TRI101. TRI101 encodes a C-3 transacetylase that acts as a self-protection or resistance factor during biosynthesis and that the presence of a free C-3 hydroxyl group is a key component of Fusarium trichothecene phytotoxicity. A second hydroxyl group is added to C-15 by the trichothecene C-15 hydroxylase TRI11, producing 15-decalonectrin, which is then acetylated by TRI3, producing calonectrin. A third hydroxyl group is added at C-4 by the cytochrome P450 monooxygenase TRI13, converting calonectrin to 3,15-diacetoxyspirpenol, which is subsequently acetylated by the acetyltransferase TRI7. A fourth hydroxyl group is added to C-8 by the cytochrome P450 monooxygenase TRI1, followed by the addition of an isovaleryl moiety by TRI16. Finally, the acetyl group is removed from the C-3 position by the trichothecene C-3 esterase TRI8 to produce T-2 toxin. The protein is Trichothecene C-15 hydroxylase of Fusarium sporotrichioides.